Consider the following 494-residue polypeptide: Nuclear distribution protein PAC1 (494 aa).

A LisH domain is found at 14-46 (QKNELDKSVLRYLNWNYKQTVRHEHAQDYESVR). Residues 90–123 (NSIVRLQKKIIELEQNTETLVSQIKDLNTQVSEL) are a coiled coil. WD repeat units follow at residues 153–192 (NVESSVTSVKLHPNLPIVFVATDHGKLYAFDLFNYTIPLA), 196–244 (SHTK…CKFQ), 251–292 (GHEH…SLKT), 295–334 (PHSQWVRSIDVLGDYIISGSHDTTLRLTHWPSGNGLSVGT), 347–395 (HFIE…LMAH), 415–454 (GHLSWVRDISIRGQYLFSCADDKSVRCWDLNTGQCLHVWE), and 457–492 (HTGFVNCLDLDVDFDSNVTPRQMMVTGGLDCKSNVF).

Belongs to the WD repeat LIS1/nudF family. In terms of assembly, self-associates. Interacts with NDL1 and dynein.

It localises to the cytoplasm. The protein resides in the cytoskeleton. Its subcellular location is the spindle pole. In terms of biological role, positively regulates the activity of the minus-end directed microtubule motor protein dynein. Plays a central role in positioning the mitotic spindle at the bud neck during cell division. Targets cytoplasmic dynein to microtubule plus ends, thereby promoting dynein-mediated microtubule sliding along the bud cortex and consequently the movement of the mitotic spindle to the bud neck. The protein is Nuclear distribution protein PAC1 of Saccharomyces cerevisiae (strain RM11-1a) (Baker's yeast).